Consider the following 315-residue polypeptide: MEEAYLALGKKILEEGHFKEDRTGTGTYSLFGYQMRFDLAKGFPLLTTKRVPFGLIKSELLWFLKGDTNIRYLLERNNHIWDEWAFERYVKSADYQGPDMTDFGHRVLQDPAFAEQYKEEHQKFCDAILNDAEFAEKYGELGNIYGAQWRHWETKDGSFIDQLANVIEMIKTNPDSRRLIVSAWNPEDVPSMALPPCHTMFQFYVNEGKLSCQLYQRSADVFLGVPFNIASYALLTHLIAHETGLEVGEFVHTLGDAHLYQNHVEQMQEQLSREVRSFPTLVLNPDKASVFDFDMEDIKVEGYDPHPTIKAPIAV.

DUMP contacts are provided by residues R22 and 177–178 (RR). C197 serves as the catalytic Nucleophile. DUMP contacts are provided by residues 217 to 220 (RSAD), N228, and 258 to 260 (HLY). Residue D220 participates in (6R)-5,10-methylene-5,6,7,8-tetrahydrofolate binding. A (6R)-5,10-methylene-5,6,7,8-tetrahydrofolate-binding site is contributed by A314.

Belongs to the thymidylate synthase family. Bacterial-type ThyA subfamily. As to quaternary structure, homodimer.

The protein localises to the cytoplasm. It catalyses the reaction dUMP + (6R)-5,10-methylene-5,6,7,8-tetrahydrofolate = 7,8-dihydrofolate + dTMP. It functions in the pathway pyrimidine metabolism; dTTP biosynthesis. Catalyzes the reductive methylation of 2'-deoxyuridine-5'-monophosphate (dUMP) to 2'-deoxythymidine-5'-monophosphate (dTMP) while utilizing 5,10-methylenetetrahydrofolate (mTHF) as the methyl donor and reductant in the reaction, yielding dihydrofolate (DHF) as a by-product. This enzymatic reaction provides an intracellular de novo source of dTMP, an essential precursor for DNA biosynthesis. In Enterococcus faecalis (strain ATCC 700802 / V583), this protein is Thymidylate synthase.